The primary structure comprises 201 residues: Protein lin-7 homolog B (201 aa).

Residues 1 to 13 (MAALVEPLGLERE) carry the Kinase interacting site motif. An L27 domain is found at 10–65 (LEREVSRAVELLERLQRSGELPPQKLQALQRVLQSRFCSAIREVYEQLYDTLDITG). Positions 93–175 (VVELPKTDEG…SVKLVVRYTP (83 aa)) constitute a PDZ domain.

It belongs to the lin-7 family. As to quaternary structure, forms a complex with CASK and CASKIN1. Component of the brain-specific heterotrimeric complex (LIN-10-LIN-2-LIN-7 complex) composed of at least APBA1, CASK, and LIN7, which associates with the motor protein KIF17 to transport vesicles along microtubules. Forms a heterotrimeric complex composed of MMP5, LIN7B and PATJ; the N-terminal L27 domain of PALS1 interacts with the L27 domain of PATJ and the C-terminal L27 domain of PALS1 interacts with the L27 domain of LIN7B. Forms a heterotrimeric complex with DLG1 and CASK via their L27 domains. Interacts with DLG4 and GRIN2B as well as CDH1 and CTNNB1, the channels KCNJ12/Kir2.2, KCNJ4/Kir2.3 and probably KCNJ2/Kir2.1 and SLC6A12/BGT-1 via its PDZ domain. The association of LIN7A with cadherin and beta-catenin is calcium-dependent, occurs at synaptic junctions and requires the actin cytoskeleton. Interacts with EGFR, ERBB2, ERBB3 and ERBB4 with both PDZ and KID domains. Interacts with ASIC3. Interacts with TOPK. Interacts with RTKN. Associates with KIF17 via APBA1. Interacts with APBA1. Interacts with MPP7. Interacts with DLG2. Interacts with DLG3.

The protein localises to the cell membrane. It is found in the basolateral cell membrane. The protein resides in the cell junction. Its subcellular location is the postsynaptic density membrane. It localises to the tight junction. Plays a role in establishing and maintaining the asymmetric distribution of channels and receptors at the plasma membrane of polarized cells. Forms membrane-associated multiprotein complexes that may regulate delivery and recycling of proteins to the correct membrane domains. The tripartite complex composed of LIN7 (LIN7A, LIN7B or LIN7C), CASK and APBA1 associates with the motor protein KIF17 to transport vesicles containing N-methyl-D-aspartate (NMDA) receptor subunit NR2B along microtubules. This complex may have the potential to couple synaptic vesicle exocytosis to cell adhesion in brain. Ensures the proper localization of GRIN2B (subunit 2B of the NMDA receptor) to neuronal postsynaptic density and may function in localizing synaptic vesicles at synapses where it is recruited by beta-catenin and cadherin. Required to localize Kir2 channels, GABA transporter (SLC6A12) and EGFR/ERBB1, ERBB2, ERBB3 and ERBB4 to the basolateral membrane of epithelial cells. May increase the amplitude of ASIC3 acid-evoked currents by stabilizing the channel at the cell surface. The chain is Protein lin-7 homolog B (LIN7B) from Bos taurus (Bovine).